Consider the following 378-residue polypeptide: Phosphoserine aminotransferase (378 aa).

Residue Arg-53 coordinates L-glutamate. 4 residues coordinate pyridoxal 5'-phosphate: Trp-117, Thr-167, Asp-190, and Gln-213. Lys-214 is subject to N6-(pyridoxal phosphate)lysine. 255–256 (NT) serves as a coordination point for pyridoxal 5'-phosphate.

Belongs to the class-V pyridoxal-phosphate-dependent aminotransferase family. SerC subfamily. In terms of assembly, homodimer. The cofactor is pyridoxal 5'-phosphate.

Its subcellular location is the cytoplasm. The catalysed reaction is O-phospho-L-serine + 2-oxoglutarate = 3-phosphooxypyruvate + L-glutamate. The enzyme catalyses 4-(phosphooxy)-L-threonine + 2-oxoglutarate = (R)-3-hydroxy-2-oxo-4-phosphooxybutanoate + L-glutamate. The protein operates within amino-acid biosynthesis; L-serine biosynthesis; L-serine from 3-phospho-D-glycerate: step 2/3. Its pathway is cofactor biosynthesis; pyridoxine 5'-phosphate biosynthesis; pyridoxine 5'-phosphate from D-erythrose 4-phosphate: step 3/5. In terms of biological role, catalyzes the reversible conversion of 3-phosphohydroxypyruvate to phosphoserine and of 3-hydroxy-2-oxo-4-phosphonooxybutanoate to phosphohydroxythreonine. In Ralstonia nicotianae (strain ATCC BAA-1114 / GMI1000) (Ralstonia solanacearum), this protein is Phosphoserine aminotransferase.